Consider the following 373-residue polypeptide: Queuine tRNA-ribosyltransferase (373 aa).

The active-site Proton acceptor is the D94. Residues 94–98 (DSGGF), D148, Q191, and G218 contribute to the substrate site. The tract at residues 249–255 (GVGTPDY) is RNA binding. D268 functions as the Nucleophile in the catalytic mechanism. Positions 273–277 (TRIGR) are RNA binding; important for wobble base 34 recognition. C306, C308, C311, and H337 together coordinate Zn(2+).

It belongs to the queuine tRNA-ribosyltransferase family. Homodimer. Within each dimer, one monomer is responsible for RNA recognition and catalysis, while the other monomer binds to the replacement base PreQ1. It depends on Zn(2+) as a cofactor.

It carries out the reaction 7-aminomethyl-7-carbaguanine + guanosine(34) in tRNA = 7-aminomethyl-7-carbaguanosine(34) in tRNA + guanine. The protein operates within tRNA modification; tRNA-queuosine biosynthesis. Its function is as follows. Catalyzes the base-exchange of a guanine (G) residue with the queuine precursor 7-aminomethyl-7-deazaguanine (PreQ1) at position 34 (anticodon wobble position) in tRNAs with GU(N) anticodons (tRNA-Asp, -Asn, -His and -Tyr). Catalysis occurs through a double-displacement mechanism. The nucleophile active site attacks the C1' of nucleotide 34 to detach the guanine base from the RNA, forming a covalent enzyme-RNA intermediate. The proton acceptor active site deprotonates the incoming PreQ1, allowing a nucleophilic attack on the C1' of the ribose to form the product. After dissociation, two additional enzymatic reactions on the tRNA convert PreQ1 to queuine (Q), resulting in the hypermodified nucleoside queuosine (7-(((4,5-cis-dihydroxy-2-cyclopenten-1-yl)amino)methyl)-7-deazaguanosine). In Ruminiclostridium cellulolyticum (strain ATCC 35319 / DSM 5812 / JCM 6584 / H10) (Clostridium cellulolyticum), this protein is Queuine tRNA-ribosyltransferase.